The following is a 389-amino-acid chain: Succinate--CoA ligase [ADP-forming] subunit beta (389 aa).

Positions 9-244 (KQLFAEYGLP…PSQEDEREAH (236 aa)) constitute an ATP-grasp domain. ATP contacts are provided by residues K46, 53-55 (GRG), E99, T102, and E107. Positions 199 and 213 each coordinate Mg(2+). Substrate contacts are provided by residues N264 and 321 to 323 (GIV).

It belongs to the succinate/malate CoA ligase beta subunit family. Heterotetramer of two alpha and two beta subunits. It depends on Mg(2+) as a cofactor.

It catalyses the reaction succinate + ATP + CoA = succinyl-CoA + ADP + phosphate. The catalysed reaction is GTP + succinate + CoA = succinyl-CoA + GDP + phosphate. It functions in the pathway carbohydrate metabolism; tricarboxylic acid cycle; succinate from succinyl-CoA (ligase route): step 1/1. Its function is as follows. Succinyl-CoA synthetase functions in the citric acid cycle (TCA), coupling the hydrolysis of succinyl-CoA to the synthesis of either ATP or GTP and thus represents the only step of substrate-level phosphorylation in the TCA. The beta subunit provides nucleotide specificity of the enzyme and binds the substrate succinate, while the binding sites for coenzyme A and phosphate are found in the alpha subunit. This chain is Succinate--CoA ligase [ADP-forming] subunit beta, found in Teredinibacter turnerae (strain ATCC 39867 / T7901).